Here is a 395-residue protein sequence, read N- to C-terminus: Na(+)/H(+) antiporter NhaA (395 aa).

12 helical membrane passes run 18–38, 64–84, 100–120, 129–149, 160–180, 182–202, 205–225, 226–246, 266–286, 295–315, 333–353, and 368–388; these read AGGI…NSPL, LLMW…GLEV, IFPA…YWLV, GGWA…LVLL, FLLA…ALFF, HDLS…LILL, FKVS…VSVL, KSGV…PLKG, FLIL…GLGM, LGVT…FSYL, IFAV…LASL, and LGIL…LFVT.

It belongs to the NhaA Na(+)/H(+) (TC 2.A.33) antiporter family.

The protein localises to the cell inner membrane. It carries out the reaction Na(+)(in) + 2 H(+)(out) = Na(+)(out) + 2 H(+)(in). Its function is as follows. Na(+)/H(+) antiporter that extrudes sodium in exchange for external protons. The polypeptide is Na(+)/H(+) antiporter NhaA (Histophilus somni (strain 129Pt) (Haemophilus somnus)).